The chain runs to 394 residues: Gap junction gamma-1 protein (394 aa).

Over Met1 to Lys22 the chain is Cytoplasmic. The helical transmembrane segment at Ile23–Tyr45 threads the bilayer. Over Asp46–Arg75 the chain is Extracellular. Residues Phe76 to Ala95 form a helical membrane-spanning segment. At Ile96 to Arg176 the chain is on the cytoplasmic side. The chain crosses the membrane as a helical span at residues Ile177–Leu199. The Extracellular portion of the chain corresponds to Tyr200 to Lys229. Residues Thr230 to Leu252 form a helical membrane-spanning segment. The Cytoplasmic segment spans residues His253 to Ile394. The segment at Ile354–Ile394 is disordered. Polar residues predominate over residues Ala356–Ser366. Low complexity predominate over residues Ala374–Ile394.

It belongs to the connexin family. Gamma-type subfamily. A connexon is composed of a hexamer of connexins. In terms of tissue distribution, mostly in heart and stomach.

Its subcellular location is the cell membrane. The protein localises to the cell junction. It is found in the gap junction. In terms of biological role, one gap junction consists of a cluster of closely packed pairs of transmembrane channels, the connexons, through which materials of low MW diffuse from one cell to a neighboring cell. The polypeptide is Gap junction gamma-1 protein (GJC1) (Gallus gallus (Chicken)).